A 203-amino-acid polypeptide reads, in one-letter code: V-type ATP synthase subunit D (203 aa).

Belongs to the V-ATPase D subunit family.

Its function is as follows. Produces ATP from ADP in the presence of a proton gradient across the membrane. The polypeptide is V-type ATP synthase subunit D (Streptococcus pneumoniae (strain CGSP14)).